Here is a 390-residue protein sequence, read N- to C-terminus: Flagellar P-ring protein (390 aa).

An N-terminal signal peptide occupies residues 1 to 36; it reads MFFSRKIRSLLLTPKRRWSLILTLCLIFTGINFSTS.

This sequence belongs to the FlgI family. As to quaternary structure, the basal body constitutes a major portion of the flagellar organelle and consists of four rings (L,P,S, and M) mounted on a central rod.

It localises to the periplasm. The protein resides in the bacterial flagellum basal body. Assembles around the rod to form the L-ring and probably protects the motor/basal body from shearing forces during rotation. The chain is Flagellar P-ring protein from Desulfotalea psychrophila (strain LSv54 / DSM 12343).